The sequence spans 209 residues: MIGLVGKKVGMTRIFTEEGVSIPVTVIEVEANRVTQVKDLANDGYRAVQVTTGAKKANRVTKPEAGHFAKAGVEAGRGLWEFRLADGEEYTVGQSISVELFAEVKKVDVTGTSKGKGFAGTVKRWNFRTQDATHGNSLSHRVPGSIGQNQTPGKVFKGKKMAGQLGNERVTVQSLDVVRVDAERNLLLVKGAVPGATGSDLIVKPAVKA.

Position 150 is an N5-methylglutamine (glutamine 150).

Belongs to the universal ribosomal protein uL3 family. Part of the 50S ribosomal subunit. Forms a cluster with proteins L14 and L19. Post-translationally, methylated by PrmB.

Functionally, one of the primary rRNA binding proteins, it binds directly near the 3'-end of the 23S rRNA, where it nucleates assembly of the 50S subunit. This chain is Large ribosomal subunit protein uL3, found in Cronobacter sakazakii (strain ATCC BAA-894) (Enterobacter sakazakii).